The sequence spans 195 residues: Imidazoleglycerol-phosphate dehydratase (195 aa).

Belongs to the imidazoleglycerol-phosphate dehydratase family.

It localises to the cytoplasm. It carries out the reaction D-erythro-1-(imidazol-4-yl)glycerol 3-phosphate = 3-(imidazol-4-yl)-2-oxopropyl phosphate + H2O. It participates in amino-acid biosynthesis; L-histidine biosynthesis; L-histidine from 5-phospho-alpha-D-ribose 1-diphosphate: step 6/9. The protein is Imidazoleglycerol-phosphate dehydratase of Aminomonas aminovorus.